Consider the following 342-residue polypeptide: tRNA dimethylallyltransferase (342 aa).

An ATP-binding site is contributed by G39–T46. Residue T41–T46 participates in substrate binding. The tract at residues D64–Q67 is interaction with substrate tRNA.

This sequence belongs to the IPP transferase family. In terms of assembly, monomer. Mg(2+) is required as a cofactor.

It carries out the reaction adenosine(37) in tRNA + dimethylallyl diphosphate = N(6)-dimethylallyladenosine(37) in tRNA + diphosphate. Its function is as follows. Catalyzes the transfer of a dimethylallyl group onto the adenine at position 37 in tRNAs that read codons beginning with uridine, leading to the formation of N6-(dimethylallyl)adenosine (i(6)A). In Chlamydia abortus (strain DSM 27085 / S26/3) (Chlamydophila abortus), this protein is tRNA dimethylallyltransferase.